We begin with the raw amino-acid sequence, 718 residues long: Methionine--tRNA ligase (718 aa).

The short motif at 27–37 (PYANGQIHIGH) is the 'HIGH' region element. The Zn(2+) site is built by Cys-158, Cys-161, Cys-171, and Cys-174. A 'KMSKS' region motif is present at residues 348–352 (KMSKS). ATP is bound at residue Lys-351. In terms of domain architecture, tRNA-binding spans 612–718 (DFAKIDLRIA…SGAKPGMRVK (107 aa)).

The protein belongs to the class-I aminoacyl-tRNA synthetase family. MetG type 1 subfamily. In terms of assembly, homodimer. It depends on Zn(2+) as a cofactor.

Its subcellular location is the cytoplasm. It carries out the reaction tRNA(Met) + L-methionine + ATP = L-methionyl-tRNA(Met) + AMP + diphosphate. In terms of biological role, is required not only for elongation of protein synthesis but also for the initiation of all mRNA translation through initiator tRNA(fMet) aminoacylation. The chain is Methionine--tRNA ligase from Burkholderia cenocepacia (strain ATCC BAA-245 / DSM 16553 / LMG 16656 / NCTC 13227 / J2315 / CF5610) (Burkholderia cepacia (strain J2315)).